Here is a 324-residue protein sequence, read N- to C-terminus: uncharacterized protein (324 aa).

Residues 1 to 11 (MNTNINVNGSN) are compositionally biased toward polar residues. Disordered regions lie at residues 1–77 (MNTN…YSYS), 132–194 (NNHY…NNNN), and 272–324 (DENI…DNDS). A compositionally biased stretch (low complexity) spans 21-64 (NENNNNNNGRNNNTNNNNNGRYNNNNNNNNNNNNNNYNLNMNST). Low complexity predominate over residues 279–324 (SNNNNNNNNNNNNSYNVNICRNNSNFNVNENNGGDNNNDNNNDNDS).

This is an uncharacterized protein from Dictyostelium discoideum (Social amoeba).